Consider the following 489-residue polypeptide: Betaine aldehyde dehydrogenase (489 aa).

Residues Thr-26 and Asp-93 each coordinate K(+). 150-152 (GAW) provides a ligand contact to NAD(+). The Charge relay system role is filled by Lys-162. 176–179 (KPSE) lines the NAD(+) pocket. Ile-180 is a binding site for K(+). An NAD(+)-binding site is contributed by 229–232 (GVET). Leu-245 contacts K(+). The active-site Proton acceptor is the Glu-251. Gly-253, Cys-285, and Glu-386 together coordinate NAD(+). Cys-285 (nucleophile) is an active-site residue. A Cysteine sulfenic acid (-SOH) modification is found at Cys-285. Residues Lys-456 and Gly-459 each contribute to the K(+) site. Glu-463 functions as the Charge relay system in the catalytic mechanism.

The protein belongs to the aldehyde dehydrogenase family. In terms of assembly, dimer of dimers. Requires K(+) as cofactor.

The enzyme catalyses betaine aldehyde + NAD(+) + H2O = glycine betaine + NADH + 2 H(+). Its pathway is amine and polyamine biosynthesis; betaine biosynthesis via choline pathway; betaine from betaine aldehyde: step 1/1. In terms of biological role, involved in the biosynthesis of the osmoprotectant glycine betaine. Catalyzes the irreversible oxidation of betaine aldehyde to the corresponding acid. This chain is Betaine aldehyde dehydrogenase, found in Paraburkholderia phytofirmans (strain DSM 17436 / LMG 22146 / PsJN) (Burkholderia phytofirmans).